Reading from the N-terminus, the 348-residue chain is Hereditary hemochromatosis protein (348 aa).

Positions 1 to 22 (MGPRARPALLLLMLLQTAVLQG) are cleaved as a signal peptide. Residues 23-114 (RLLRSHSLHY…IMENHNHSKE (92 aa)) form an alpha-1 region. Over 23–306 (RLLRSHSLHY…WEPSPSGTLV (284 aa)) the chain is Extracellular. N110, N130, and N234 each carry an N-linked (GlcNAc...) asparagine glycan. The tract at residues 115 to 205 (SHTLQVILGC…ELGRGVLDQQ (91 aa)) is alpha-2. Intrachain disulfides connect C124–C187 and C225–C282. An alpha-3 region spans residues 206–297 (VPPLVKVTHH…GLDQPLIVIW (92 aa)). One can recognise an Ig-like C1-type domain in the interval 207–298 (PPLVKVTHHV…LDQPLIVIWE (92 aa)). The tract at residues 298 to 306 (EPSPSGTLV) is connecting peptide. The helical transmembrane segment at 307-330 (IGVISGIAVFVVILFIGILFIILR) threads the bilayer. Residues 331-348 (KRQGSRGAMGHYVLAERE) lie on the Cytoplasmic side of the membrane.

This sequence belongs to the MHC class I family. As to quaternary structure, binds TFR through the extracellular domain in a pH-dependent manner. As to expression, expressed in all tissues tested except brain.

Its subcellular location is the cell membrane. Its function is as follows. Binds to transferrin receptor (TFR) and reduces its affinity for iron-loaded transferrin. This Homo sapiens (Human) protein is Hereditary hemochromatosis protein (HFE).